The sequence spans 251 residues: Tropomyosin-2 (251 aa).

A coiled-coil region spans residues 1-251; the sequence is MSGEEKLGKL…DTVADEPDDE (251 aa).

This sequence belongs to the tropomyosin family. Homodimer. Striated muscle specific.

In Podocoryna carnea (Hydrozoan), this protein is Tropomyosin-2 (TPM2).